Reading from the N-terminus, the 364-residue chain is tRNA 2-selenouridine synthase (364 aa).

In terms of domain architecture, Rhodanese spans 14–137 (LIADTPIIDV…LRQTTIQATI (124 aa)). Cys97 functions as the S-selanylcysteine intermediate in the catalytic mechanism.

Belongs to the SelU family. In terms of assembly, monomer.

It catalyses the reaction 5-methylaminomethyl-2-thiouridine(34) in tRNA + selenophosphate + (2E)-geranyl diphosphate + H2O + H(+) = 5-methylaminomethyl-2-selenouridine(34) in tRNA + (2E)-thiogeraniol + phosphate + diphosphate. The catalysed reaction is 5-methylaminomethyl-2-thiouridine(34) in tRNA + (2E)-geranyl diphosphate = 5-methylaminomethyl-S-(2E)-geranyl-thiouridine(34) in tRNA + diphosphate. The enzyme catalyses 5-methylaminomethyl-S-(2E)-geranyl-thiouridine(34) in tRNA + selenophosphate + H(+) = 5-methylaminomethyl-2-(Se-phospho)selenouridine(34) in tRNA + (2E)-thiogeraniol. It carries out the reaction 5-methylaminomethyl-2-(Se-phospho)selenouridine(34) in tRNA + H2O = 5-methylaminomethyl-2-selenouridine(34) in tRNA + phosphate. Its function is as follows. Involved in the post-transcriptional modification of the uridine at the wobble position (U34) of tRNA(Lys), tRNA(Glu) and tRNA(Gln). Catalyzes the conversion of 2-thiouridine (S2U-RNA) to 2-selenouridine (Se2U-RNA). Acts in a two-step process involving geranylation of 2-thiouridine (S2U) to S-geranyl-2-thiouridine (geS2U) and subsequent selenation of the latter derivative to 2-selenouridine (Se2U) in the tRNA chain. The polypeptide is tRNA 2-selenouridine synthase (Escherichia coli O8 (strain IAI1)).